The chain runs to 194 residues: MLEDEILSEFRASQALLEGHFLLSSGRHSAHYLQCARVLMDPMRASRLAAATAAKIPRDLRHQIQKVVSPAMGGVIIGHEMGRALGVEAMFVERPTGTFELRRGFALNPGEKVLMVEDVVTTGLSSREAIKAIEQAGGEVIAAAALVDRSAGAVDLGVPFFPLVALNFPTYAPDELPPELAATEAVKPGSRAKP.

A 5-phospho-alpha-D-ribose 1-diphosphate-binding site is contributed by 117 to 125; that stretch reads EDVVTTGLS. Residues Thr-121 and Arg-149 each coordinate orotate.

This sequence belongs to the purine/pyrimidine phosphoribosyltransferase family. PyrE subfamily. Homodimer. The cofactor is Mg(2+).

It catalyses the reaction orotidine 5'-phosphate + diphosphate = orotate + 5-phospho-alpha-D-ribose 1-diphosphate. It participates in pyrimidine metabolism; UMP biosynthesis via de novo pathway; UMP from orotate: step 1/2. Catalyzes the transfer of a ribosyl phosphate group from 5-phosphoribose 1-diphosphate to orotate, leading to the formation of orotidine monophosphate (OMP). This is Orotate phosphoribosyltransferase from Novosphingobium aromaticivorans (strain ATCC 700278 / DSM 12444 / CCUG 56034 / CIP 105152 / NBRC 16084 / F199).